Consider the following 124-residue polypeptide: Fluoride-specific ion channel FluC (124 aa).

Transmembrane regions (helical) follow at residues 5–25 (VYIA…SGLV), 32–52 (SFPY…GLVM), 67–87 (FAIT…SFET), and 96–116 (LLIA…CTWI). Residues Gly-75 and Thr-78 each coordinate Na(+).

Belongs to the fluoride channel Fluc/FEX (TC 1.A.43) family.

It localises to the cell inner membrane. The enzyme catalyses fluoride(in) = fluoride(out). Na(+) is not transported, but it plays an essential structural role and its presence is essential for fluoride channel function. Functionally, fluoride-specific ion channel. Important for reducing fluoride concentration in the cell, thus reducing its toxicity. The chain is Fluoride-specific ion channel FluC from Geobacter sp. (strain M21).